The chain runs to 134 residues: Thionin-2.1 (134 aa).

The N-terminal stretch at 1–24 is a signal peptide; the sequence is MKGRILILSLLIMSLVMAQVQVEA. Cystine bridges form between Cys27/Cys61, Cys28/Cys55, and Cys40/Cys49. A propeptide spans 68-134 (acidic domain); it reads AILENSADAT…VVPPGPPKLL (67 aa).

The protein belongs to the plant thionin (TC 1.C.44) family. Detected in rosette leaves and at a very high level in flowers and in siliques.

It localises to the secreted. Functionally, seems to function as a defense factor. Thionins are small plant proteins which are toxic to animal cells. They seem to exert their toxic effect at the level of the cell membrane. Their precise function is not known. This chain is Thionin-2.1 (THI2.1), found in Arabidopsis thaliana (Mouse-ear cress).